The chain runs to 251 residues: Orcokinin peptides type A (251 aa).

An N-terminal signal peptide occupies residues 1-20 (MTAQMFTIALLLSLSAIAAA). 3 propeptides span residues 21–46 (GTIK…GAPV), 225–231 (DYDVFPD), and 249–251 (NVE).

It belongs to the orcokinin family.

It localises to the secreted. Its function is as follows. Myotropic peptides that enhance both the frequency and amplitude of spontaneous hindgut contractions. The polypeptide is Orcokinin peptides type A (Procambarus clarkii (Red swamp crayfish)).